Reading from the N-terminus, the 144-residue chain is DNA-directed RNA polymerases II and V subunit 6B (144 aa).

Positions 1–32 (MADDDYNEVDDLGYEDEPAEPEIEEGVEEDAD) are enriched in acidic residues. Residues 1-62 (MADDDYNEVD…EPVQRPRKTS (62 aa)) are disordered. Residues 46–56 (TEDKVETEPVQ) are compositionally biased toward basic and acidic residues.

This sequence belongs to the archaeal Rpo6/eukaryotic RPB6 RNA polymerase subunit family. In terms of assembly, component of the RNA polymerase II and V complexes.

It localises to the nucleus. Functionally, DNA-dependent RNA polymerase catalyzes the transcription of DNA into RNA using the four ribonucleoside triphosphates as substrates. Component of RNA polymerase II which synthesizes mRNA precursors and many functional non-coding RNAs. Pol II is the central component of the basal RNA polymerase II transcription machinery. It is composed of mobile elements that move relative to each other. Component of RNA polymerase V which mediates RNA-directed DNA methylation-dependent (RdDM) transcriptional gene silencing (TGS) of endogenous repeated sequences, including transposable elements. The chain is DNA-directed RNA polymerases II and V subunit 6B (NRPB6B) from Arabidopsis thaliana (Mouse-ear cress).